The sequence spans 151 residues: Cytochrome c-type biogenesis protein CcmE (151 aa).

The Cytoplasmic segment spans residues Met1–Arg8. The helical; Signal-anchor for type II membrane protein transmembrane segment at Leu9–Ala29 threads the bilayer. Residues Leu30–Gly151 lie on the Periplasmic side of the membrane. Residues His124 and Tyr128 each coordinate heme.

Belongs to the CcmE/CycJ family.

It localises to the cell inner membrane. Its function is as follows. Heme chaperone required for the biogenesis of c-type cytochromes. Transiently binds heme delivered by CcmC and transfers the heme to apo-cytochromes in a process facilitated by CcmF and CcmH. In Pseudomonas fluorescens biotype C, this protein is Cytochrome c-type biogenesis protein CcmE.